Here is a 253-residue protein sequence, read N- to C-terminus: 5'-nucleotidase SurE (253 aa).

Asp-8, Asp-9, Ser-40, and Asn-97 together coordinate a divalent metal cation.

This sequence belongs to the SurE nucleotidase family. A divalent metal cation serves as cofactor.

Its subcellular location is the cytoplasm. It carries out the reaction a ribonucleoside 5'-phosphate + H2O = a ribonucleoside + phosphate. Nucleotidase that shows phosphatase activity on nucleoside 5'-monophosphates. The chain is 5'-nucleotidase SurE from Desulforamulus reducens (strain ATCC BAA-1160 / DSM 100696 / MI-1) (Desulfotomaculum reducens).